Here is a 144-residue protein sequence, read N- to C-terminus: Large ribosomal subunit protein uL16 (144 aa).

The protein belongs to the universal ribosomal protein uL16 family. Part of the 50S ribosomal subunit.

Its function is as follows. Binds 23S rRNA and is also seen to make contacts with the A and possibly P site tRNAs. This chain is Large ribosomal subunit protein uL16, found in Bacillus subtilis (strain 168).